The primary structure comprises 515 residues: uncharacterized protein (515 aa).

Disordered stretches follow at residues 117–188 (DNIL…RKSQ), 362–453 (RSTS…AESM), and 496–515 (GNAV…DYFN). Basic and acidic residues-rich tracts occupy residues 370-380 (KNVESETKQEE), 388-402 (PAED…EVIE), and 428-438 (PIKEIEDKVEP). The segment covering 502 to 515 (ADTESMDDFMDYFN) has biased composition (acidic residues).

This is an uncharacterized protein from Ostreid herpesvirus 1 (isolate France) (OsHV-1).